A 458-amino-acid polypeptide reads, in one-letter code: Bifunctional protein GlmU (458 aa).

The pyrophosphorylase stretch occupies residues 1 to 229 (MTNYAIILAA…FNESLGVNDR (229 aa)). UDP-N-acetyl-alpha-D-glucosamine is bound by residues 8-11 (LAAG), Lys22, Gln72, and 77-78 (GT). Position 102 (Asp102) interacts with Mg(2+). Gly139, Glu154, Asn169, and Asn227 together coordinate UDP-N-acetyl-alpha-D-glucosamine. A Mg(2+)-binding site is contributed by Asn227. Residues 230-250 (VALATAESVMRRRINKAHMIN) are linker. The segment at 251–458 (GVTFQNPDAT…AKRLPHYPQK (208 aa)) is N-acetyltransferase. UDP-N-acetyl-alpha-D-glucosamine contacts are provided by Arg332 and Lys350. The active-site Proton acceptor is His362. Residues Tyr365 and Asn376 each coordinate UDP-N-acetyl-alpha-D-glucosamine. Acetyl-CoA-binding positions include Ala379, 385 to 386 (NY), Ser404, Ala422, and Arg439.

This sequence in the N-terminal section; belongs to the N-acetylglucosamine-1-phosphate uridyltransferase family. It in the C-terminal section; belongs to the transferase hexapeptide repeat family. In terms of assembly, homotrimer. Mg(2+) is required as a cofactor.

Its subcellular location is the cytoplasm. The catalysed reaction is alpha-D-glucosamine 1-phosphate + acetyl-CoA = N-acetyl-alpha-D-glucosamine 1-phosphate + CoA + H(+). It carries out the reaction N-acetyl-alpha-D-glucosamine 1-phosphate + UTP + H(+) = UDP-N-acetyl-alpha-D-glucosamine + diphosphate. Its pathway is nucleotide-sugar biosynthesis; UDP-N-acetyl-alpha-D-glucosamine biosynthesis; N-acetyl-alpha-D-glucosamine 1-phosphate from alpha-D-glucosamine 6-phosphate (route II): step 2/2. The protein operates within nucleotide-sugar biosynthesis; UDP-N-acetyl-alpha-D-glucosamine biosynthesis; UDP-N-acetyl-alpha-D-glucosamine from N-acetyl-alpha-D-glucosamine 1-phosphate: step 1/1. It participates in bacterial outer membrane biogenesis; LPS lipid A biosynthesis. Its function is as follows. Catalyzes the last two sequential reactions in the de novo biosynthetic pathway for UDP-N-acetylglucosamine (UDP-GlcNAc). The C-terminal domain catalyzes the transfer of acetyl group from acetyl coenzyme A to glucosamine-1-phosphate (GlcN-1-P) to produce N-acetylglucosamine-1-phosphate (GlcNAc-1-P), which is converted into UDP-GlcNAc by the transfer of uridine 5-monophosphate (from uridine 5-triphosphate), a reaction catalyzed by the N-terminal domain. This Streptococcus uberis (strain ATCC BAA-854 / 0140J) protein is Bifunctional protein GlmU.